Here is a 372-residue protein sequence, read N- to C-terminus: Probable arabinan endo-1,5-alpha-L-arabinosidase B (372 aa).

A signal peptide spans 1-16 (MTVLVALFCLVTWTLC). The span at 23–34 (STQGTQQPQQPE) shows a compositional bias: low complexity. A disordered region spans residues 23-52 (STQGTQQPQQPEKTPHPHPQPEDAFPPTHA). Asp-59 acts as the Proton acceptor in catalysis. A glycan (N-linked (GlcNAc...) asparagine) is linked at Asn-120. Glu-252 functions as the Proton donor in the catalytic mechanism. Asn-363 carries N-linked (GlcNAc...) asparagine glycosylation.

It belongs to the glycosyl hydrolase 43 family.

Its subcellular location is the secreted. It catalyses the reaction Endohydrolysis of (1-&gt;5)-alpha-arabinofuranosidic linkages in (1-&gt;5)-arabinans.. It participates in glycan metabolism; L-arabinan degradation. Functionally, endo-1,5-alpha-L-arabinanase involved in degradation of pectin. Its preferred substrate is linear 1,5-alpha-L-arabinan. The protein is Probable arabinan endo-1,5-alpha-L-arabinosidase B (abnB) of Aspergillus fumigatus (strain CBS 144.89 / FGSC A1163 / CEA10) (Neosartorya fumigata).